A 209-amino-acid polypeptide reads, in one-letter code: Orotate phosphoribosyltransferase (209 aa).

Residues arginine 96, lysine 100, histidine 102, and 122–130 contribute to the 5-phospho-alpha-D-ribose 1-diphosphate site; that span reads EDLISTGGS. Serine 126 is a binding site for orotate.

This sequence belongs to the purine/pyrimidine phosphoribosyltransferase family. PyrE subfamily. As to quaternary structure, homodimer. Requires Mg(2+) as cofactor.

It carries out the reaction orotidine 5'-phosphate + diphosphate = orotate + 5-phospho-alpha-D-ribose 1-diphosphate. It functions in the pathway pyrimidine metabolism; UMP biosynthesis via de novo pathway; UMP from orotate: step 1/2. In terms of biological role, catalyzes the transfer of a ribosyl phosphate group from 5-phosphoribose 1-diphosphate to orotate, leading to the formation of orotidine monophosphate (OMP). The polypeptide is Orotate phosphoribosyltransferase (Streptococcus pyogenes serotype M3 (strain ATCC BAA-595 / MGAS315)).